The primary structure comprises 239 residues: DNA damage-regulated autophagy modulator protein 1 (239 aa).

Transmembrane regions (helical) follow at residues 15-35, 54-74, 91-111, 119-139, 162-182, and 201-221; these read ILVI…VLIG, SGVF…TMYT, IYFN…MGIV, VPAV…MYIL, MTVS…SILS, and TSAI…LTFI.

It belongs to the DRAM/TMEM150 family.

The protein resides in the lysosome membrane. In terms of biological role, lysosomal modulator of autophagy that plays a central role in p53/TP53-mediated apoptosis. This Xenopus laevis (African clawed frog) protein is DNA damage-regulated autophagy modulator protein 1 (dram1).